A 276-amino-acid polypeptide reads, in one-letter code: Ribosomal RNA small subunit methyltransferase A (276 aa).

Positions 27, 29, 54, 75, 101, and 123 each coordinate S-adenosyl-L-methionine.

The protein belongs to the class I-like SAM-binding methyltransferase superfamily. rRNA adenine N(6)-methyltransferase family. RsmA subfamily.

It is found in the cytoplasm. The enzyme catalyses adenosine(1518)/adenosine(1519) in 16S rRNA + 4 S-adenosyl-L-methionine = N(6)-dimethyladenosine(1518)/N(6)-dimethyladenosine(1519) in 16S rRNA + 4 S-adenosyl-L-homocysteine + 4 H(+). In terms of biological role, specifically dimethylates two adjacent adenosines (A1518 and A1519) in the loop of a conserved hairpin near the 3'-end of 16S rRNA in the 30S particle. May play a critical role in biogenesis of 30S subunits. The chain is Ribosomal RNA small subunit methyltransferase A from Bartonella quintana (strain Toulouse) (Rochalimaea quintana).